A 439-amino-acid polypeptide reads, in one-letter code: MGDKPTIAISHLGCEKNRIDTEHMLGMLVEAGYGVDTNEELADYVIVNTCSFIEAARQESVRTLVELAEANKKIVITGCMAQHFQEQLLEELPEAVAVVGTGDYHKIVNVIERVELGERVKQVSIEPTYIADETTPRYRTTTEGVAYLRVAEGCDYRCAFCIIPHLRGNQRSRTIESIVAEAEQLVSQGVKEIILISQITTNYGLDIYGKPKLAELLRALGKVDIPWIRMHYAYPTGLTPDAIAAIQETPNVLPYLDLPLQHSHPDILRAMNRPWQGRVNDGIIDRIKTALPTAVLRTTFIVGFPGETQEHFEHLLEFVQRHEFDHVGVFTFSSEEGTPAYKLPNQLAQEVMDDRRYQLMELQQPISQKKNQQEVGKIVDVLIEQENPESGELIGRSGRFSPEVDGLVYVKGQAKLGTIVPVAIHHADTYDLYGQVVNN.

The 112-residue stretch at Pro-5–Leu-116 folds into the MTTase N-terminal domain. Residues Cys-14, Cys-50, Cys-79, Cys-154, Cys-158, and Cys-161 each contribute to the [4Fe-4S] cluster site. The Radical SAM core domain occupies Thr-140–Lys-369. A TRAM domain is found at Gln-372–Asn-438.

Belongs to the methylthiotransferase family. RimO subfamily. The cofactor is [4Fe-4S] cluster.

Its subcellular location is the cytoplasm. The enzyme catalyses L-aspartate(89)-[ribosomal protein uS12]-hydrogen + (sulfur carrier)-SH + AH2 + 2 S-adenosyl-L-methionine = 3-methylsulfanyl-L-aspartate(89)-[ribosomal protein uS12]-hydrogen + (sulfur carrier)-H + 5'-deoxyadenosine + L-methionine + A + S-adenosyl-L-homocysteine + 2 H(+). Catalyzes the methylthiolation of an aspartic acid residue of ribosomal protein uS12. The chain is Ribosomal protein uS12 methylthiotransferase RimO from Nostoc punctiforme (strain ATCC 29133 / PCC 73102).